The following is a 430-amino-acid chain: Histidine--tRNA ligase (430 aa).

It belongs to the class-II aminoacyl-tRNA synthetase family. Homodimer.

It is found in the cytoplasm. It catalyses the reaction tRNA(His) + L-histidine + ATP = L-histidyl-tRNA(His) + AMP + diphosphate + H(+). In Parasynechococcus marenigrum (strain WH8102), this protein is Histidine--tRNA ligase.